We begin with the raw amino-acid sequence, 168 residues long: Small ribosomal subunit protein uS5 (168 aa).

Residues 13-76 (LAEKLIAVNR…EKARRNMINV (64 aa)) enclose the S5 DRBM domain.

Belongs to the universal ribosomal protein uS5 family. As to quaternary structure, part of the 30S ribosomal subunit. Contacts proteins S4 and S8.

Its function is as follows. With S4 and S12 plays an important role in translational accuracy. Functionally, located at the back of the 30S subunit body where it stabilizes the conformation of the head with respect to the body. The polypeptide is Small ribosomal subunit protein uS5 (Pseudoalteromonas translucida (strain TAC 125)).